Consider the following 194-residue polypeptide: Holliday junction branch migration complex subunit RuvA (194 aa).

Positions 1–64 are domain I; it reads MISRLTGKLV…EDAHLLFGFA (64 aa). Residues 65 to 143 form a domain II region; the sequence is TAEERKTFRQ…AHTVTDGLFA (79 aa). Positions 144–147 are flexible linker; that stretch reads AAPA. Residues 147–194 form a domain III region; it reads AADETEDIVSTLLALGYSEREAKAAVKGVPEGTDVGEGVRLALKNLLK.

The protein belongs to the RuvA family. In terms of assembly, homotetramer. Forms an RuvA(8)-RuvB(12)-Holliday junction (HJ) complex. HJ DNA is sandwiched between 2 RuvA tetramers; dsDNA enters through RuvA and exits via RuvB. An RuvB hexamer assembles on each DNA strand where it exits the tetramer. Each RuvB hexamer is contacted by two RuvA subunits (via domain III) on 2 adjacent RuvB subunits; this complex drives branch migration. In the full resolvosome a probable DNA-RuvA(4)-RuvB(12)-RuvC(2) complex forms which resolves the HJ.

The protein resides in the cytoplasm. Its function is as follows. The RuvA-RuvB-RuvC complex processes Holliday junction (HJ) DNA during genetic recombination and DNA repair, while the RuvA-RuvB complex plays an important role in the rescue of blocked DNA replication forks via replication fork reversal (RFR). RuvA specifically binds to HJ cruciform DNA, conferring on it an open structure. The RuvB hexamer acts as an ATP-dependent pump, pulling dsDNA into and through the RuvAB complex. HJ branch migration allows RuvC to scan DNA until it finds its consensus sequence, where it cleaves and resolves the cruciform DNA. This chain is Holliday junction branch migration complex subunit RuvA, found in Neisseria meningitidis serogroup B (strain ATCC BAA-335 / MC58).